The chain runs to 91 residues: MANKQDLIAEVAAKTGLTKKDSEKAVNAFGEVVTEFLAKGEKVQLIGFGTFETRERAAREGRNPQTGEAIKIAATVVPAFKAGKALKDAVK.

This sequence belongs to the bacterial histone-like protein family. In terms of assembly, homodimer.

Its function is as follows. Histone-like DNA-binding protein which is capable of wrapping DNA to stabilize it, and thus to prevent its denaturation under extreme environmental conditions. In Lactococcus lactis subsp. lactis (strain IL1403) (Streptococcus lactis), this protein is DNA-binding protein HU (hup).